Here is a 212-residue protein sequence, read N- to C-terminus: 3-oxo-tetronate 4-phosphate decarboxylase (212 aa).

The Proton acceptor role is filled by Glu79. Zn(2+) is bound by residues Glu79, His98, and His100. The active-site Proton donor is Tyr125. Zn(2+) is bound at residue His165.

This sequence belongs to the aldolase class II family. AraD/FucA subfamily. Requires Zn(2+) as cofactor.

The catalysed reaction is 3-dehydro-4-O-phospho-D-erythronate + H(+) = dihydroxyacetone phosphate + CO2. It catalyses the reaction 3-dehydro-4-O-phospho-L-erythronate + H(+) = dihydroxyacetone phosphate + CO2. Functionally, catalyzes the decarboxylation of 3-oxo-tetronate 4-phosphate to dihydroxyacetone phosphate (DHAP) and CO(2). The sequence is that of 3-oxo-tetronate 4-phosphate decarboxylase from Escherichia coli (strain K12).